The following is a 548-amino-acid chain: Membrane protein insertase YidC (548 aa).

Residues N6–D26 traverse the membrane as a helical segment. The segment at N28–A54 is disordered. Positions P29–T42 are enriched in low complexity. A run of 4 helical transmembrane segments spans residues F350–Y370, F424–I444, L458–I478, and P499–V519.

This sequence belongs to the OXA1/ALB3/YidC family. Type 1 subfamily. As to quaternary structure, interacts with the Sec translocase complex via SecD. Specifically interacts with transmembrane segments of nascent integral membrane proteins during membrane integration.

It localises to the cell inner membrane. Its function is as follows. Required for the insertion and/or proper folding and/or complex formation of integral membrane proteins into the membrane. Involved in integration of membrane proteins that insert both dependently and independently of the Sec translocase complex, as well as at least some lipoproteins. Aids folding of multispanning membrane proteins. The sequence is that of Membrane protein insertase YidC from Salmonella arizonae (strain ATCC BAA-731 / CDC346-86 / RSK2980).